Reading from the N-terminus, the 78-residue chain is Large ribosomal subunit protein bL28 (78 aa).

The interval 1–30 (MAAHCQVTGAGPGFGHSISHSHRRTKRRFD) is disordered.

The protein belongs to the bacterial ribosomal protein bL28 family.

The polypeptide is Large ribosomal subunit protein bL28 (Micrococcus luteus (strain ATCC 4698 / DSM 20030 / JCM 1464 / CCM 169 / CCUG 5858 / IAM 1056 / NBRC 3333 / NCIMB 9278 / NCTC 2665 / VKM Ac-2230) (Micrococcus lysodeikticus)).